The chain runs to 439 residues: Xylose isomerase (439 aa).

Active-site residues include His-101 and Asp-104. Residues Glu-232, Glu-268, His-271, Asp-296, Asp-307, Asp-309, and Asp-339 each coordinate Mg(2+).

This sequence belongs to the xylose isomerase family. As to quaternary structure, homotetramer. Mg(2+) is required as a cofactor.

It localises to the cytoplasm. The catalysed reaction is alpha-D-xylose = alpha-D-xylulofuranose. In Marinomonas sp. (strain MWYL1), this protein is Xylose isomerase.